The primary structure comprises 407 residues: Phosphopentomutase (407 aa).

The Mn(2+) site is built by aspartate 10, aspartate 306, histidine 311, aspartate 347, histidine 348, and histidine 359.

The protein belongs to the phosphopentomutase family. Requires Mn(2+) as cofactor.

The protein localises to the cytoplasm. It catalyses the reaction 2-deoxy-alpha-D-ribose 1-phosphate = 2-deoxy-D-ribose 5-phosphate. The catalysed reaction is alpha-D-ribose 1-phosphate = D-ribose 5-phosphate. It participates in carbohydrate degradation; 2-deoxy-D-ribose 1-phosphate degradation; D-glyceraldehyde 3-phosphate and acetaldehyde from 2-deoxy-alpha-D-ribose 1-phosphate: step 1/2. Functionally, isomerase that catalyzes the conversion of deoxy-ribose 1-phosphate (dRib-1-P) and ribose 1-phosphate (Rib-1-P) to deoxy-ribose 5-phosphate (dRib-5-P) and ribose 5-phosphate (Rib-5-P), respectively. The chain is Phosphopentomutase from Salmonella dublin (strain CT_02021853).